A 179-amino-acid chain; its full sequence is Large ribosomal subunit protein uL5 (179 aa).

This sequence belongs to the universal ribosomal protein uL5 family. Part of the 50S ribosomal subunit; part of the 5S rRNA/L5/L18/L25 subcomplex. Contacts the 5S rRNA and the P site tRNA. Forms a bridge to the 30S subunit in the 70S ribosome.

Its function is as follows. This is one of the proteins that bind and probably mediate the attachment of the 5S RNA into the large ribosomal subunit, where it forms part of the central protuberance. In the 70S ribosome it contacts protein S13 of the 30S subunit (bridge B1b), connecting the 2 subunits; this bridge is implicated in subunit movement. Contacts the P site tRNA; the 5S rRNA and some of its associated proteins might help stabilize positioning of ribosome-bound tRNAs. The polypeptide is Large ribosomal subunit protein uL5 (Rickettsia felis (strain ATCC VR-1525 / URRWXCal2) (Rickettsia azadi)).